We begin with the raw amino-acid sequence, 298 residues long: Syntenin-1 (298 aa).

Ser-2 bears the N-acetylserine mark. Positions 2–60 are interaction with PDCD6IP; it reads SLYPSLEDLKVDKVIQAQTAFSANPANPAILSEASAPIPHDGNLYPRLYPELSQYMGLS. 3 short sequence motifs (LYPX(n)L motif) span residues 3–7, 45–49, and 49–53; these read LYPSL, LYPRL, and LYPEL. Ser-6 bears the Phosphoserine mark. Tyr-46 is subject to Phosphotyrosine. PDZ domains lie at 114–193 and 198–273; these read EVIL…IRDR and TITM…MPAF. Residues Asn-215 and 250–251 each bind a 1,2-diacyl-sn-glycero-3-phospho-(1D-myo-inositol-4,5-bisphosphate); that span reads KD.

In terms of assembly, monomer and homodimer. Interacts with SDC1, SDC2, SDC3, SDC4, NRXN2, EPHA7, EPHB1, NF2 isoform 1, TGFA and IL5RA. Interacts with NFASC and PTPRJ. Interacts with SDCBP2. Interacts with PDCD6IP. Forms a complex with PDCD6IP and SDC2. Interacts (via C-terminus) with TGFBR1. Binds to FZD7; this interaction is increased by inositol trisphosphate (IP3). Interacts with SMO. Phosphorylated on tyrosine residues. As to expression, expressed in lung cancers, including adenocarcinoma, squamous cell carcinoma and small-cell carcinoma (at protein level). Widely expressed. Expressed in fetal kidney, liver, lung and brain. In adult highest expression in heart and placenta.

The protein localises to the cell junction. The protein resides in the focal adhesion. Its subcellular location is the adherens junction. It localises to the cell membrane. It is found in the endoplasmic reticulum membrane. The protein localises to the nucleus. The protein resides in the melanosome. Its subcellular location is the cytoplasm. It localises to the cytosol. It is found in the cytoskeleton. The protein localises to the secreted. The protein resides in the extracellular exosome. Its subcellular location is the membrane raft. Functionally, multifunctional adapter protein involved in diverse array of functions including trafficking of transmembrane proteins, neuro and immunomodulation, exosome biogenesis, and tumorigenesis. Positively regulates TGFB1-mediated SMAD2/3 activation and TGFB1-induced epithelial-to-mesenchymal transition (EMT) and cell migration in various cell types. May increase TGFB1 signaling by enhancing cell-surface expression of TGFR1 by preventing the interaction between TGFR1 and CAV1 and subsequent CAV1-dependent internalization and degradation of TGFR1. In concert with SDC1/4 and PDCD6IP, regulates exosome biogenesis. Regulates migration, growth, proliferation, and cell cycle progression in a variety of cancer types. In adherens junctions may function to couple syndecans to cytoskeletal proteins or signaling components. Seems to couple transcription factor SOX4 to the IL-5 receptor (IL5RA). May also play a role in vesicular trafficking. Seems to be required for the targeting of TGFA to the cell surface in the early secretory pathway. The chain is Syntenin-1 (SDCBP) from Homo sapiens (Human).